The chain runs to 313 residues: B3 domain-containing transcription factor FUS3 (313 aa).

A DNA-binding region (TF-B3) is located at residues 92-194 (FQKELKNSDV…NYVIQARKAS (103 aa)).

In terms of assembly, interacts with KIN10. Phosphorylation by KIN10 increases its stability. Phosphorylated at one or more of the Ser-55, Ser-56 and/or Ser-57 residues. Expressed in cotyledons and hypocotyls.

The protein localises to the nucleus. Phosphorylation by KIN10 is required to positively regulates embryogenesis, seed yield, and plant growth at high temperature. Transcription regulator involved in gene regulation during late embryogenesis. Its expression to the epidermis is sufficient to control foliar organ identity by regulating positively the synthesis abscisic acid (ABA) and negatively gibberellin production. Negatively regulates TTG1 in the embryo. Positively regulates the abundance of the ABI3 protein in the seed. Cooperates with KIN10 to regulate developmental phase transitions and lateral organ development and act both as positive regulators of abscisic acid (ABA) signaling during germination. This is B3 domain-containing transcription factor FUS3 (FUS3) from Arabidopsis thaliana (Mouse-ear cress).